A 110-amino-acid polypeptide reads, in one-letter code: UPF0102 protein Abu_0255 (110 aa).

The protein belongs to the UPF0102 family.

The sequence is that of UPF0102 protein Abu_0255 from Aliarcobacter butzleri (strain RM4018) (Arcobacter butzleri).